The following is a 303-amino-acid chain: MVHIMFNQAAQELTTIRDILRFAVSRFNEAGLFFGHGTDNAHDEAAYLILHTLNLPLDMLAPYLDAKLLEAEKEEVLAVIERRAVEHIPAAYLTHQAWQGEFDFYVDERVIIPRSFIYELLGDGLRPWIEYDELVHNALDLCTGSGCLAIQMAHHYPDAQIDAVDVSLDALEVAGINVEDYGLEERIRLIHTDLFEGLEGTYDLIVSNPPYVDAESVELLPEEYLHEPELALGSGADGLDATRQILLNAAKFLNPKGVLLVEIGHNRDVLEAAYPELPFTWLETSGGDGFVFLLTREQLLGEE.

This sequence belongs to the protein N5-glutamine methyltransferase family. PrmB subfamily.

The enzyme catalyses L-glutaminyl-[ribosomal protein uL3] + S-adenosyl-L-methionine = N(5)-methyl-L-glutaminyl-[ribosomal protein uL3] + S-adenosyl-L-homocysteine + H(+). Functionally, methylates large ribosomal subunit protein uL3 on a specific glutamine residue. This is Ribosomal protein uL3 glutamine methyltransferase from Neisseria meningitidis serogroup B (strain ATCC BAA-335 / MC58).